A 1870-amino-acid chain; its full sequence is Dedicator of cytokinesis protein 5 (1870 aa).

An SH3 domain is found at 8-69 (KRQKYGVAIY…PETYIHLKEA (62 aa)). Ser365 is modified (phosphoserine). Positions 443-627 (RNDIYVTLIH…DSFQIATLIC (185 aa)) constitute a C2 DOCK-type domain. The residue at position 818 (Lys818) is an N6-acetyllysine. In terms of domain architecture, DOCKER spans 1231–1642 (YKEKKREDIY…VEKHYGVITL (412 aa)). Residues 1679–1702 (VVSTSSNSSDNAPSRPGSDGSILE) are disordered. Ser1756, Ser1766, Ser1785, and Ser1789 each carry phosphoserine. Residues 1772 to 1870 (NRLSPFHGSS…GIPTSEPGSQ (99 aa)) are disordered. The segment covering 1784 to 1794 (QSTPLSPPPLT) has biased composition (pro residues). Thr1794 is subject to Phosphothreonine. A compositionally biased stretch (polar residues) spans 1797-1808 (ATRTLSSPSLQT). Residue Thr1814 is modified to Phosphothreonine. Over residues 1815-1824 (PVPPPPPPKS) the composition is skewed to pro residues. Phosphoserine is present on residues Ser1834 and Ser1869.

It belongs to the DOCK family. Interacts with CRK and CRKL. Interacts (via N-terminus) with tensin TNS3 (via N-terminus); the interaction increases DOCK5 guanine nucleotide exchange activity towards Rac. Interacts with ELMO1.

It localises to the cytoplasm. The protein resides in the cell membrane. Its subcellular location is the cell projection. The protein localises to the podosome. Guanine nucleotide exchange factor (GEF) for Rho and Rac. GEF proteins activate small GTPases by exchanging bound GDP for free GTP. Along with DOCK1, mediates CRK/CRKL regulation of epithelial and endothelial cell spreading and migration on type IV collagen. This Homo sapiens (Human) protein is Dedicator of cytokinesis protein 5 (DOCK5).